The following is a 285-amino-acid chain: MSIKTIKYFSTIIVAVVAVLAGWWLWNYYMQSPWTRDGKIRAEQVSITPQVSGRIVELNIKDNQLVNAGDLLLTIDKTPFQIAELNAQAQLAKAQSDLAKANNEANRRRHLSQNFISAEELDTANLNVKAMQASVDAAQATLKQAQWQLAQTEIRAPVSGWVTNLTTRIGDYADTGKPLFALVDSHSFYVIGYFEETKLRHIREGAPAQITLYSDNKTLQGHVSSIGRAIYDQSVESDSSLIPDVKPNVPWVRLAQRVPVRFALDKVPGDVTLVSGTTCSIAVGQ.

The chain crosses the membrane as a helical span at residues 6 to 26 (IKYFSTIIVAVVAVLAGWWLW).

The protein belongs to the membrane fusion protein (MFP) (TC 8.A.1) family.

The protein localises to the membrane. This is an uncharacterized protein from Escherichia coli (strain K12).